Reading from the N-terminus, the 474-residue chain is Dol-P-Glc:Glc(2)Man(9)GlcNAc(2)-PP-Dol alpha-1,2-glucosyltransferase (474 aa).

Residues 1-6 (MAQLEG) lie on the Cytoplasmic side of the membrane. A helical transmembrane segment spans residues 7 to 27 (YYFSAALSCTFLVSCLLFSAF). Over 28-64 (SRALREPYMDEIFHLPQAQRYCEGRFSLSQWDPMITT) the chain is Extracellular. Residues 65–85 (LPGLYLVSVGVVKPASWLLGW) form a helical membrane-spanning segment. Over 86–97 (SEHVICSIGVLR) the chain is Cytoplasmic. The chain crosses the membrane as a helical span at residues 98 to 118 (FVNLLFSVGNFYLLYLLFRKV). At 119-126 (QPRNKASS) the chain is on the extracellular side. A helical transmembrane segment spans residues 127-147 (SIQRILSTLTLAVFPTLYFFN). Residues 148 to 150 (FLY) are Cytoplasmic-facing. The helical transmembrane segment at 151–171 (YTEAGSVFFTLFAYLMCLYGN) threads the bilayer. The Extracellular segment spans residues 172 to 175 (HRTS). A helical membrane pass occupies residues 176-196 (ALLGFCGFMFRQTNIIWAAFC). Over 197–256 (AGHLIAQKCSEAWKIELQKKKEERLAPTKGPLSELRRVLQFLLVYAMSLKNLRMLFLLTW) the chain is Cytoplasmic. Residues 257 to 277 (PYVLLLLAFFAFVVVNGGIVV) traverse the membrane as a helical segment. Topologically, residues 278–283 (GDRSSH) are extracellular. A helical membrane pass occupies residues 284-304 (EACLHFPQLFYFFSFTAFFSF). Topologically, residues 305–317 (PHLLSLTKVKTFL) are cytoplasmic. The chain crosses the membrane as a helical span at residues 318–338 (SLVWKRRVQFSVVTLVSILLV). The Extracellular segment spans residues 339-365 (WKFTYVHKYLLADNRHYTFYVWKRVFQ). Residues 366–386 (RHEVVKYLLVPAYIFAGWAIA) form a helical membrane-spanning segment. Topologically, residues 387 to 392 (DSLKAK) are cytoplasmic. Residues 393–413 (SIFWNLMFFVCLVASTVPQKL) traverse the membrane as a helical segment. The Extracellular portion of the chain corresponds to 414-436 (LEFRYFILPYIIYRLNIPLPPIS). A helical membrane pass occupies residues 437 to 457 (RLVCELGCYTVVNFVTFYIFL). Topologically, residues 458 to 473 (NKTFQWPNSQDIQRFM) are cytoplasmic.

Belongs to the ALG10 glucosyltransferase family. Interacts with KCNH1; may regulate KCNH1, possibly by regulating its N-glycosylation. Interacts with KCNH2; may reduce KCNH2 sensitivity to classic proarrhythmic drug blockade, possibly by regulating its N-glycosylation.

It is found in the endoplasmic reticulum membrane. The enzyme catalyses an alpha-D-Glc-(1-&gt;3)-alpha-D-Glc-(1-&gt;3)-alpha-D-Man-(1-&gt;2)-alpha-D-Man-(1-&gt;2)-alpha-D-Man-(1-&gt;3)-[alpha-D-Man-(1-&gt;2)-alpha-D-Man-(1-&gt;3)-[alpha-D-Man-(1-&gt;2)-alpha-D-Man-(1-&gt;6)]-alpha-D-Man-(1-&gt;6)]-beta-D-Man-(1-&gt;4)-beta-D-GlcNAc-(1-&gt;4)-alpha-D-GlcNAc-diphospho-di-trans,poly-cis-dolichol + a di-trans,poly-cis-dolichyl beta-D-glucosyl phosphate = a alpha-D-Glc-(1-&gt;2)-alpha-D-Glc-(1-&gt;3)-alpha-D-Glc-(1-&gt;3)-alpha-D-Man-(1-&gt;2)-alpha-D-Man-(1-&gt;2)-alpha-D-Man-(1-&gt;3)-[alpha-D-Man-(1-&gt;2)-alpha-D-Man-(1-&gt;3)-[alpha-D-Man-(1-&gt;2)-alpha-D-Man-(1-&gt;6)]-alpha-D-Man-(1-&gt;6)]-beta-D-Man-(1-&gt;4)-beta-D-GlcNAc-(1-&gt;4)-alpha-D-GlcNAc-diphospho-di-trans,poly-cis-dolichol + a di-trans,poly-cis-dolichyl phosphate + H(+). It participates in protein modification; protein glycosylation. Its function is as follows. Dol-P-Glc:Glc(2)Man(9)GlcNAc(2)-PP-Dol alpha-1,2-glucosyltransferase that operates in the biosynthetic pathway of dolichol-linked oligosaccharides, the glycan precursors employed in protein asparagine (N)-glycosylation. The assembly of dolichol-linked oligosaccharides begins on the cytosolic side of the endoplasmic reticulum membrane and finishes in its lumen. The sequential addition of sugars to dolichol pyrophosphate produces dolichol-linked oligosaccharides containing fourteen sugars, including two GlcNAcs, nine mannoses and three glucoses. Once assembled, the oligosaccharide is transferred from the lipid to nascent proteins by oligosaccharyltransferases. In the lumen of the endoplasmic reticulum, adds the third and last glucose residue from dolichyl phosphate glucose (Dol-P-Glc) onto the lipid-linked oligosaccharide intermediate Glc(2)Man(9)GlcNAc(2)-PP-Dol to produce Glc(3)Man(9)GlcNAc(2)-PP-Dol. The chain is Dol-P-Glc:Glc(2)Man(9)GlcNAc(2)-PP-Dol alpha-1,2-glucosyltransferase from Mus musculus (Mouse).